Consider the following 335-residue polypeptide: MYAILQKFLFTQDAEWSHDFTINWLKRTQHNFLNVAYKQHIDDKPVEFLGITFKNPVGLAAGLDKNAECIDAFAAMGFGFIEVGTVTPKAQAGNDKPRMFRLPAGQAIINRMGFNNKGVDYLVEQVKQAKYKGVLGINIGKNKTTPEDEALNDYLICLRKVYAHASYVTVNISSPNTPGLRNLQYGDALTQLLEGLKEEQANLEVKHNKRVPILIKIAPDLEDSELDSMVDSFLTVGIDGVIATNTTLDRDRVKGQEHAEEAGGLSGSVLTDKSQQIVSSLCTKLAGNVPVIGVGGIDSPHAAKARIEAGSPLIQVYSALIYQGPKLIKEIVDSL.

Residues 61–65 (AGLDK) and Thr-85 contribute to the FMN site. Lys-65 is a binding site for substrate. Position 110-114 (110-114 (NRMGF)) interacts with substrate. Residues Asn-138 and Asn-171 each contribute to the FMN site. A substrate-binding site is contributed by Asn-171. Ser-174 (nucleophile) is an active-site residue. Residue Asn-176 participates in substrate binding. Residues Lys-216 and Thr-244 each coordinate FMN. Residue 245–246 (NT) coordinates substrate. FMN contacts are provided by residues Gly-267, Gly-296, and 317-318 (YS).

Belongs to the dihydroorotate dehydrogenase family. Type 2 subfamily. Monomer. The cofactor is FMN.

It localises to the cell membrane. It carries out the reaction (S)-dihydroorotate + a quinone = orotate + a quinol. Its pathway is pyrimidine metabolism; UMP biosynthesis via de novo pathway; orotate from (S)-dihydroorotate (quinone route): step 1/1. In terms of biological role, catalyzes the conversion of dihydroorotate to orotate with quinone as electron acceptor. This chain is Dihydroorotate dehydrogenase (quinone), found in Pseudoalteromonas atlantica (strain T6c / ATCC BAA-1087).